Consider the following 345-residue polypeptide: Baculoviral IAP repeat-containing protein 7-B (345 aa).

BIR repeat units follow at residues 46–112 (RQRS…PFLQ) and 154–219 (RLGS…DFLL). Zn(2+) contacts are provided by Cys-188, Cys-191, His-208, and Cys-215. Ser-237 carries the phosphoserine modification. A Phosphoserine; by MAPK1 modification is found at Ser-241. A Phosphoserine modification is found at Ser-253. Phosphoserine; by MAPK1 is present on Ser-257. Residues 258–286 (TESVSVPRAPTPGERSEPPKVSGPPLSTE) are disordered. The RING-type zinc finger occupies 298 to 333 (CKVCMDKDVSMLFVPCGHLVVCTECAPNLRHCPICR).

The protein belongs to the IAP family. Post-translationally, auto-ubiquitinated, and degraded in a 2-step mechanism; a caspase-independent first step and a caspase-dependent second step. In terms of processing, phosphorylated via MAPK-dependent and CDK-dependent pathways during oocyte maturation. Phosphorylation does not appear to affect caspase inhibition or autoubiquitination activity.

Its subcellular location is the cytoplasm. The catalysed reaction is S-ubiquitinyl-[E2 ubiquitin-conjugating enzyme]-L-cysteine + [acceptor protein]-L-lysine = [E2 ubiquitin-conjugating enzyme]-L-cysteine + N(6)-ubiquitinyl-[acceptor protein]-L-lysine.. Weak apoptotic suppressor. Has E3 ubiquitin-protein ligase activity. Weak inhibitor of caspase activity. The chain is Baculoviral IAP repeat-containing protein 7-B (birc7-b) from Xenopus laevis (African clawed frog).